The sequence spans 589 residues: Glucose starvation modulator protein 1 (589 aa).

Positions 20-48 (CVFCHQKHLQCSNERPCKNCVKRNIGHEC) form a DNA-binding region, zn(2)-C6 fungal-type. Disordered stretches follow at residues 59 to 90 (LTGN…PSVA), 218 to 240 (NNSN…NPEP), and 340 to 362 (ANGQ…PGNG). The span at 80–90 (TPITASSPSVA) shows a compositional bias: polar residues. Positions 347–357 (LLDHNKDDSRK) are enriched in basic and acidic residues. Residues 471-542 (SLLDYKKLVE…FKFFKNIAVN (72 aa)) form the PAS domain.

Belongs to the ERT1/acuK family.

It is found in the nucleus. Functionally, transcription factor which regulates nonfermentable carbon utilization. This Candida tropicalis (strain ATCC MYA-3404 / T1) (Yeast) protein is Glucose starvation modulator protein 1 (GSM1).